The sequence spans 115 residues: Pancreatic progenitor cell differentiation and proliferation factor B (115 aa).

The tract at residues 21 to 48 is disordered; that stretch reads IGSTSSSSSCGSSEYSGEVIPHHPGLPK. Over residues 22-37 the composition is skewed to low complexity; sequence GSTSSSSSCGSSEYSG.

Belongs to the PPDPF family.

Probable regulator of exocrine pancreas development. In Danio rerio (Zebrafish), this protein is Pancreatic progenitor cell differentiation and proliferation factor B (ppdpfb).